The sequence spans 561 residues: Chaperonin GroEL 1 (561 aa).

ATP is bound by residues 29-32, 86-90, G413, and D495; these read TMGP and DGTTT.

Belongs to the chaperonin (HSP60) family. As to quaternary structure, forms a cylinder of 14 subunits composed of two heptameric rings stacked back-to-back. Interacts with the co-chaperonin GroES.

The protein localises to the cytoplasm. It catalyses the reaction ATP + H2O + a folded polypeptide = ADP + phosphate + an unfolded polypeptide.. Its function is as follows. Together with its co-chaperonin GroES, plays an essential role in assisting protein folding. The GroEL-GroES system forms a nano-cage that allows encapsulation of the non-native substrate proteins and provides a physical environment optimized to promote and accelerate protein folding. The chain is Chaperonin GroEL 1 from Trichodesmium erythraeum (strain IMS101).